We begin with the raw amino-acid sequence, 228 residues long: Putative lipoprotein LprH (228 aa).

Residues 1–27 form the signal peptide; it reads MACLGRPGCRGWAGASLVLVVVLALAA. C28 is lipidated: N-palmitoyl cysteine. A lipid anchor (S-diacylglycerol cysteine) is attached at C28. The chain crosses the membrane as a helical span at residues 191–211; sequence GLAVVPHAVLVLSACGFKPGF.

It localises to the cell membrane. This Mycobacterium bovis (strain ATCC BAA-935 / AF2122/97) protein is Putative lipoprotein LprH (lprH).